A 106-amino-acid chain; its full sequence is Thioredoxin (106 aa).

Positions 2–106 constitute a Thioredoxin domain; sequence SHYIELTEEN…LKEQLNKLLG (105 aa). Cys-30 and Cys-33 are joined by a disulfide.

Belongs to the thioredoxin family.

Functionally, participates in various redox reactions through the reversible oxidation of its active center dithiol to a disulfide and catalyzes dithiol-disulfide exchange reactions. In Helicobacter pylori (strain J99 / ATCC 700824) (Campylobacter pylori J99), this protein is Thioredoxin (trxA).